Reading from the N-terminus, the 79-residue chain is Acyl carrier protein (79 aa).

Residues 2–77 (SDIEARVKKI…LAIDYAKSHA (76 aa)) enclose the Carrier domain. An O-(pantetheine 4'-phosphoryl)serine modification is found at S37.

This sequence belongs to the acyl carrier protein (ACP) family. 4'-phosphopantetheine is transferred from CoA to a specific serine of apo-ACP by AcpS. This modification is essential for activity because fatty acids are bound in thioester linkage to the sulfhydryl of the prosthetic group.

The protein localises to the cytoplasm. The protein operates within lipid metabolism; fatty acid biosynthesis. Its function is as follows. Carrier of the growing fatty acid chain in fatty acid biosynthesis. The protein is Acyl carrier protein of Methylibium petroleiphilum (strain ATCC BAA-1232 / LMG 22953 / PM1).